Consider the following 853-residue polypeptide: MAEAEEQETESLEESTDESEEESEEEPKLKYERLSNGVTEILQKDAASCMTVHDKFLALGTHYGKVYLLDVQGNITQKFDVSPVKINQISLDDSGEHMGVCSEDGKLQVFGLYSGEEFHETFDCPIKIIAVHPQFVRSSCKQFVTGGKKLLLFERTWMNRWKSSVLHEGEGNIRSVKWRGHLIAWANNMGVKVFDITSKQRISNVPRDDISLRPDMYPCSLCWKDNVTLIIGWGTSIKICSVKERHASEMRDLPSRYVEIVSQFETEFYISGLAPLCDQLVVLSYVKEVSEKTEREYCARPRLDIIQPLPETCEEISSDALTVRGFQENECRDYHLEYSEGESLFYVVSPRDVVVAKERDQDDHIDWLLEKKKYEEALMAAEISQRNIKRHKILDIGLAYVNHLVERGEYDMAARKCQKILGKNASLWEYEVYKFKEIGQLKAISPYLPRGDPVLKPLIYEMILHEFLESDYEGFATLIREWPGDLYNNSVIVQAVRDHLKKDSQNKTLLKTLAELYTYDKNYGNALEIYLTLRHKDVFQLIHKHNLFSSIKDKIVLLMDFDSEKAVDMLLDNEDKISIKKVVEELEDRPELQHVYLHKLFKRDHHKGQRYHEKQISLYAEYDRPNLLPFLRDSTHCPLEKALEICQQRNFVEETVYLLSRMGNSRSALKMIMEELHDVDKAIEFAKEQDDGELWEDLILYSIDKPPFITGLLNNIGTHVDPILLIHRIKEGMEIPNLRDSLVKILQDYNLQILLREGCKKILVADSLSLLKKMHRTQMKGVLVDEENICESCLSPILPTDAAKPFSVVVFHCRHMFHKECLPMPSMNAPAQYCNICSAKNRGPGSAILEMKK.

The span at 1–25 (MAEAEEQETESLEESTDESEEESEE) shows a compositional bias: acidic residues. The disordered stretch occupies residues 1–32 (MAEAEEQETESLEESTDESEEESEEEPKLKYE). Residues 1 to 539 (MAEAEEQETE…YLTLRHKDVF (539 aa)) are interaction with ARL8B. Residues 567–711 (VDMLLDNEDK…SIDKPPFITG (145 aa)) form a CHCR repeat. The segment at 790 to 838 (CESCLSPILPTDAAKPFSVVVFHCRHMFHKECLPMPSMNAPAQYCNICS) adopts an RING-type; atypical zinc-finger fold.

It belongs to the VPS41 family. In terms of assembly, component of the putative homotypic fusion and vacuole protein sorting (HOPS) complex; the core of which composed of the class C Vps proteins VPS11, VPS16, VPS18 and VPS33A, is associated with VPS39 and VPS41. Interacts with RILP, MON1B. Interacts with ARL8B (GTP-bound form); involved in recruitment to lysosomes and probably hierarchial assembly of the HOPS complex at lysosomal membranes. In vitro can self-assemble into a lattice. Associates with adapter protein complex 3 (AP-3) and clathrin:AP-3 complexes. Interacts with STX17; this interaction is increased in the absence of TMEM39A. Interacts with ARL8B and PLEKHM1; the interaction mediates the recruitment of the HOPS complex to lysosomes. Interacts with RAB7, RAB2A and RAB2B. Interacts with RAB39A (GTP-bound) and RAB39B (GTP-bound); interaction with RAB39A leads to a functional HOPS complex that mediates autophagosome-lysosome membrane tethering.

The protein resides in the endosome membrane. It is found in the late endosome membrane. Its subcellular location is the early endosome membrane. It localises to the lysosome membrane. The protein localises to the golgi apparatus. The protein resides in the trans-Golgi network. It is found in the cytoplasmic vesicle. Its subcellular location is the clathrin-coated vesicle. It localises to the cytoplasm. The protein localises to the cytosol. Plays a role in vesicle-mediated protein trafficking to lysosomal compartments including the endocytic membrane transport and autophagic pathways. Believed to act in part as a core component of the putative HOPS endosomal tethering complex is proposed to be involved in the Rab5-to-Rab7 endosome conversion probably implicating MON1A/B, and via binding SNAREs and SNARE complexes to mediate tethering and docking events during SNARE-mediated membrane fusion. The HOPS complex is proposed to be recruited to Rab7 on the late endosomal membrane and to regulate late endocytic, phagocytic and autophagic traffic towards lysosomes. Involved in homotypic vesicle fusions between late endosomes and in heterotypic fusions between late endosomes and lysosomes implicated in degradation of endocytosed cargo. Required for fusion of autophagosomes with lysosomes. Links the HOPS complex to endosomal via its association with RILP and to lysosomal membranes via its association with ARL8B, suggesting that these interactions may bring the compartments to close proximity for fusion. Involved in the direct trans-Golgi network to late endosomes transport of lysosomal membrane proteins independently of HOPS. Involved in sorting to the regulated secretory pathway presumably implicating the AP-3 adapter complex. May play a role in HOPS-independent function in the regulated secretory pathway. This is Vacuolar protein sorting-associated protein 41 homolog (Vps41) from Mus musculus (Mouse).